The sequence spans 123 residues: Protein TraJ (123 aa).

Monomer.

Its subcellular location is the cytoplasm. Its function is as follows. Transfer of plasmid RP4 during bacterial conjugation requires the plasmid-encoded TraJ protein, which binds to a 19-base pair invert sequence repetition within the transfer origin. TraJ protein is bound to only one side of the DNA helix. This nucleoprotein structure is the initial complex in the pathway to assemble a functional relaxosome. The sequence is that of Protein TraJ (traJ) from Escherichia coli.